The chain runs to 876 residues: AP-1 complex subunit gamma-1 (876 aa).

HEAT repeat units follow at residues 97–135 (DERQ…ICSA), 136–173 (EMAR…KVPD), 248–284 (FLHI…KTES), 308–345 (SLRV…FDDQ), 346–382 (AVQR…ENNV), 384–417 (QLTK…KFSP), 418–454 (EKLW…NASE), 506–545 (VTES…RFPS), and 560–599 (SLLL…ATFN). The GAE domain occupies 756–873 (PAYAPIVAYE…LEEGQVSNFP (118 aa)).

Belongs to the adaptor complexes large subunit family. As to quaternary structure, adaptor protein complex 1 (AP-1) is a heterotetramer composed of two large adaptins (gamma-type subunit and beta-type subunit), a medium adaptin (mu-type subunit) and a small adaptin (sigma-type subunit). Binds to EPSIN1. Interacts with DRP2A/ADL6 (via C-terminus).

It is found in the golgi apparatus. Its subcellular location is the cytoplasmic vesicle. The protein resides in the clathrin-coated vesicle membrane. Subunit of clathrin-associated adaptor protein complex 1 that plays a role in protein sorting at the trans-Golgi network and early endosomes (TGN/EE). The AP complexes mediate both the recruitment of clathrin to membranes and the recognition of sorting signals within the cytosolic tails of transmembrane cargo molecules. This chain is AP-1 complex subunit gamma-1 (GAMMA-ADR), found in Arabidopsis thaliana (Mouse-ear cress).